The chain runs to 205 residues: Inactive ribonuclease-like protein 9 (205 aa).

Residues 1–24 (MMLITTHSLLLLLLLLQLLQPLQF) form the signal peptide. 3 disulfides stabilise this stretch: Cys97/Cys152, Cys115/Cys167, and Cys122/Cys129. N-linked (GlcNAc...) asparagine glycans are attached at residues Asn130 and Asn142.

The protein belongs to the pancreatic ribonuclease family.

It is found in the secreted. Does not exhibit any ribonuclease activity. The polypeptide is Inactive ribonuclease-like protein 9 (RNASE9) (Cebus capucinus (White-faced sapajou)).